Here is a 292-residue protein sequence, read N- to C-terminus: MQTEIQSSSLRHHPYRRARLPRSDEETRASLTEQHPLLPDCDHADYHNVSSVRGLPCAAGFTLLQEFPVPWDMILTPEEIKILKRCMSVCLCPATLDLVRAQMVSGYERWILHCHCSSPGSLQCRAGGTLLAVWFRRVIYGCMFNQRFPWYRQIVNRNMPKEIMYMGSVFMRGRHLIYCRIWYDGHVGSIIPNMSFGWSALNYGLLNNMVIMCCTYCENMAEIRMRCCARRTRRLMLKAVGIIVRETCDPDPICSSRTEPRRQRLLRALMERHRPILFSEYESVRSSHSTRL.

This sequence belongs to the adenoviridae E4 30 to 34 kDa protein family. As to quaternary structure, interacts with E1B-55k.

It localises to the host nucleus. The protein resides in the host cytoplasm. Plays a major role to prevent cellular inhibition of viral genome replication by nuclear bodies. Assembles an SCF-like E3 ubiquitin ligase complex based on the cellular proteins ELOB, ELOC, CUL5 and RBX1, in cooperation with viral E1B-55K. This viral RING-type ligase ubiquitinates cellular substrates prior to proteasomal degradation: p53/TP53, LIG4, MRE11-RAD50-NBS1 (MRN) complex, ITGA3, DAXX and BLM. This Human adenovirus D serotype 9 (HAdV-9) protein is Early E4 34 kDa protein.